A 217-amino-acid chain; its full sequence is U2 snRNP component ist3 (217 aa).

Residues 31–109 enclose the RRM domain; the sequence is AYIYIGNLDF…RLVRVDHVAS (79 aa). 2 disordered regions span residues 119 to 138 and 154 to 217; these read PANL…STIN and EVEQ…DLDG. The segment covering 128–138 has biased composition (polar residues); it reads SGSSLSVSTIN. At S160 the chain carries Phosphoserine. 2 stretches are compositionally biased toward basic and acidic residues: residues 161–176 and 185–198; these read PKDE…DYIH and HESS…DSNR. The span at 199–217 shows a compositional bias: basic residues; that stretch reads HSRHHRRHSRSRRHRDLDG.

It belongs to the IST3 family. In terms of assembly, belongs to the 40S cdc5-associated complex (or cwf complex), a spliceosome sub-complex reminiscent of a late-stage spliceosome composed of the U2, U5 and U6 snRNAs and at least brr2, cdc5, cwf2/prp3, cwf3/syf1, cwf4/syf3, cwf5/ecm2, spp42/cwf6, cwf7/spf27, cwf8, cwf9, cwf10, cwf11, cwf12, prp45/cwf13, cwf14, cwf15, cwf16, cwf17, cwf18, cwf19, cwf20, cwf21, cwf22, cwf23, cwf24, cwf25, cwf26, cyp7/cwf27, cwf28, cwf29/ist3, lea1, msl1, prp5/cwf1, prp10, prp12/sap130, prp17, prp22, sap61, sap62, sap114, sap145, slu7, smb1, smd1, smd3, smf1, smg1 and syf2.

Its subcellular location is the nucleus. Its function is as follows. Required for pre-mRNA splicing and spliceosome assembly. The polypeptide is U2 snRNP component ist3 (cwf29) (Schizosaccharomyces pombe (strain 972 / ATCC 24843) (Fission yeast)).